The sequence spans 821 residues: Calpain-3 (821 aa).

The segment at 7-37 is disordered; it reads ASVAPRTAAEPRSPGPVPHPAQSKATEAGGG. In terms of domain architecture, Calpain catalytic spans 74 to 417; the sequence is LYVDPEFPPD…FTKLEICNLT (344 aa). Active-site residues include cysteine 129, histidine 334, and asparagine 358. A domain III region spans residues 418–586; it reads ADALQSDKLQ…KRNLSEEVEN (169 aa). Residues 587–649 form a linker region; the sequence is TISVDRPVKK…QPGSSDQESE (63 aa). Positions 609 to 652 are disordered; sequence ANSNKELGVDQESEEGKGKTSPDKQKQSPQPQPGSSDQESEEQQ. Residues 622–634 show a composition bias toward basic and acidic residues; that stretch reads EEGKGKTSPDKQK. Residues 635-645 are compositionally biased toward low complexity; that stretch reads QSPQPQPGSSD. 4 EF-hand domains span residues 649–683, 692–725, 722–757, and 787–821; these read EEQQ…VVNK, FTLE…NKIK, NKIK…AGFH, and VRLE…TMYA. Residues 650 to 821 form a domain IV region; sequence EQQQFRNIFK…LEWLQLTMYA (172 aa). Residues alanine 662, aspartate 665, glutamate 667, glutamate 672, aspartate 705, aspartate 707, serine 709, lysine 711, glutamate 716, aspartate 735, aspartate 737, serine 739, threonine 741, glutamate 746, aspartate 800, aspartate 802, aspartate 804, and isoleucine 806 each contribute to the Ca(2+) site.

It belongs to the peptidase C2 family. Homodimer; via EF-hand domain 4. Interacts with TTN/titin. Interacts with CMYA5; this interaction, which results in CMYA5 proteolysis, may protect CAPN3 from autolysis. Interacts with SIMC1. Interacts with UTP25; the interaction is required for CAPN3 translocation to the nucleolus. In terms of tissue distribution, isoform I is skeletal muscle specific.

Its subcellular location is the cytoplasm. The protein resides in the nucleus. It is found in the nucleolus. The enzyme catalyses Broad endopeptidase activity.. Its activity is regulated as follows. Activated by micromolar concentrations of calcium and inhibited by calpastatin. Calcium-regulated non-lysosomal thiol-protease. Proteolytically cleaves CTBP1 at 'His-409'. Mediates, with UTP25, the proteasome-independent degradation of p53/TP53. This chain is Calpain-3, found in Homo sapiens (Human).